The following is a 352-amino-acid chain: C-C chemokine receptor type 5 (352 aa).

Topologically, residues 1–30 (MDYQVSSPIYDIDYGPSEPCRKIDVKQMGA) are extracellular. Position 3 is a sulfotyrosine (tyrosine 3). O-linked (GalNAc...) serine glycans are attached at residues serine 6 and serine 7. Sulfotyrosine is present on residues tyrosine 10 and tyrosine 14. 2 cysteine pairs are disulfide-bonded: cysteine 20–cysteine 269 and cysteine 101–cysteine 178. A helical membrane pass occupies residues 31 to 58 (QLLPPLYSLVFLFGFVGNMLVVLILINC). Over 59-68 (KRLKSMTDIY) the chain is Cytoplasmic. A helical transmembrane segment spans residues 69 to 89 (LLNLAISDLLFLFTIPFWAHY). Residues 90-102 (AAGQWDFGNTMCQ) are Extracellular-facing. A helical membrane pass occupies residues 103 to 124 (FLTALYFIGFFSGIFFIILLTI). The Cytoplasmic portion of the chain corresponds to 125-141 (DRYLAIVHAVFALKART). The chain crosses the membrane as a helical span at residues 142-166 (VTFGVVTSVITWVVAVFASLPGIIF). The Extracellular segment spans residues 167–198 (TRSQKEGYHYSCSPHFPFSQYRFWKNFETLKM). A helical membrane pass occupies residues 199–218 (VILGLVLPLLVMVICYSGIL). The Cytoplasmic portion of the chain corresponds to 219-235 (KTLLRCRNEKKRHRAVR). A helical transmembrane segment spans residues 236–260 (LIFTIMIVYFLFWAPYNIVLLINTY). Residues 261-277 (PDFFGVNNCNSSNRLDQ) lie on the Extracellular side of the membrane. The chain crosses the membrane as a helical span at residues 278-301 (AMQVTETLGMTHCCVNPIIYAFVG). The Cytoplasmic segment spans residues 302–352 (EKFRNYLVIFFQKHIAKRFCKCCSIFQKEAPERANSVYTRSTGEQEISVGL). Residues cysteine 321, cysteine 323, and cysteine 324 are each lipidated (S-palmitoyl cysteine). Phosphoserine; by BARK1 occurs at positions 337, 342, and 349.

The protein belongs to the G-protein coupled receptor 1 family. As to quaternary structure, interacts with PRAF2. Efficient ligand binding to CCL3/MIP-1alpha and CCL4/MIP-1beta requires sulfation, O-glycosylation and sialic acid modifications. Glycosylation on Ser-6 is required for efficient binding of CCL4. Interacts with GRK2. Interacts with ARRB1 and ARRB2. Interacts with CNIH4. Interacts with S100A4; this interaction stimulates T-lymphocyte chemotaxis. In terms of processing, sulfated on at least 2 of the N-terminal tyrosines. Sulfation is required for efficient binding of the chemokines, CCL3 and CCL4. Palmitoylation in the C-terminal is important for cell surface expression. Post-translationally, phosphorylation on serine residues in the C-terminal is stimulated by binding CC chemokines especially by APO-RANTES. In terms of processing, O-glycosylated, but not N-glycosylated. Ser-6 appears to be the major site even if Ser-7 may be also O-glycosylated. Also sialylated glycans present which contribute to chemokine binding. Ser-17 may also be glycosylated and, if so, with small moieties such as a T-antigen.

It is found in the cell membrane. Receptor for a number of inflammatory CC-chemokines including CCL3/MIP-1-alpha, CCL4/MIP-1-beta and RANTES and subsequently transduces a signal by increasing the intracellular calcium ion level. May play a role in the control of granulocytic lineage proliferation or differentiation. Participates in T-lymphocyte migration to the infection site by acting as a chemotactic receptor. This chain is C-C chemokine receptor type 5 (CCR5), found in Saimiri sciureus (Common squirrel monkey).